The chain runs to 505 residues: Surface lipoprotein assembly modifier 2 (505 aa).

The signal sequence occupies residues 1–19 (MLYFRYGFLVVWCAAGVSA). Residues 23–188 (ADAPAILDDK…RFRKKTEGLT (166 aa)) form an N-terminal domain region. Positions 189-505 (GWRFSGGISP…EVFVSADWRF (317 aa)) are C-terminal probable beta barrel. 14 beta stranded membrane-spanning segments follow: residues 190–200 (WRFSGGISPAV), 232–243 (LNYEIEAEKLTP), 248–258 (HYLLFRSNIGG), 273–283 (FGRAYLGWQYK), 287–297 (QTAGILPFYQV), 326–335 (VGVQLSHTYR), 340–350 (WQFSVALEHYR), 368–377 (GFYVSSAKRL), 381–391 (ATVFGGWQFVR), 411–420 (NGVYAGWAQE), 427–437 (LNSRVSASYAR), 456–465 (WNVSLALSHD), 472–482 (IVPALNYRFGR), and 495–505 (SEVFVSADWRF).

Belongs to the Slam family.

The protein localises to the cell outer membrane. Its function is as follows. Required for correct export to the cell surface of cell outer membrane lipoprotein HpuA heterologously in E.coli (hpuA does not exist in N.meningitidis strain MC58). In Neisseria meningitidis serogroup B (strain ATCC BAA-335 / MC58), this protein is Surface lipoprotein assembly modifier 2.